The following is a 227-amino-acid chain: DNA repair protein RecO (227 aa).

This sequence belongs to the RecO family.

In terms of biological role, involved in DNA repair and RecF pathway recombination. In Pseudomonas savastanoi pv. phaseolicola (strain 1448A / Race 6) (Pseudomonas syringae pv. phaseolicola (strain 1448A / Race 6)), this protein is DNA repair protein RecO.